A 740-amino-acid chain; its full sequence is MKIAELNLPQALKDFYTGSGIPELYPPQAEAIRQGLLDGKNLLAAIPTASGKTLLAEMAMLKSIAEGGKAIYIVPLKALASEKYDRFLEFSKLPIKPDGVKVGIATGDFDSRDEYLGEKDIIVATSEKTDSLLRNGASWLSGLSVVVADEVHLIDSPNRGPTLEVTLAKLRKINVNLQILALSATIGNAKALAKWMDAALVQSEWRPTTLKEGVFYGRAITFKKEKRTVNNAGPDEVNSLVADTLEEGGQCLVFANTRKSSESIAQKVARSLSKKLQPAEKEQLAKLKQDVLRHAETDTCEKLAECVGNGVAFHHAGLKGEHRRIVEDGFRQNILKVIACTPTLAAGLNLPARRVIIRDYKRFDVNYGSVPIPVLEYKQMAGRAGRPRLDPYGEAVLIAKNYDEFGELMENYINADPEHITSKLGTEPAMRAHALSAVATDFCRSRQDLKAFMDTTFFAYQRGDLSHVIDNVLNFLLEENMIIESKGGSLKATDLGSLVSKLYIDPLSAALIAEGLEKAKKRPDVAEFGLLHLICSTPDVKSLYLRRGDYSWIIRYADEHASDFLSDVPDSYGDDVEFEQFLAGVKTAALAEMWINEKSEEAITTFFNIGPGDIRNLMETCTWLMHGTAEISALLGAPATRTARELAIRIENGASRELLDLITLKGVGRVRARKLYDAGYTSRDKLKAAEIPAIAAIPGIGDKLAVSIMSQLGRKVDHTPPETEEQPQVSGQSTLFSFDG.

ATP is bound by residues Gln28 and 46–53 (IPTASGKT). Residues 33–204 (RQGLLDGKNL…WMDAALVQSE (172 aa)) form the Helicase ATP-binding domain. Residues 149–152 (DEVH) carry the DEAH box motif. Residues 236-436 (EVNSLVADTL…EPAMRAHALS (201 aa)) form the Helicase C-terminal domain. The interval 716-740 (VDHTPPETEEQPQVSGQSTLFSFDG) is disordered. Residues 726–740 (QPQVSGQSTLFSFDG) are compositionally biased toward polar residues.

This sequence belongs to the helicase family. Hel308 subfamily. In terms of assembly, monomer.

The enzyme catalyses Couples ATP hydrolysis with the unwinding of duplex DNA by translocating in the 3'-5' direction.. The catalysed reaction is ATP + H2O = ADP + phosphate + H(+). In terms of biological role, DNA-dependent ATPase and 3'-5' DNA helicase that may be involved in repair of stalled replication forks. In Methanocella arvoryzae (strain DSM 22066 / NBRC 105507 / MRE50), this protein is ATP-dependent DNA helicase Hel308.